Consider the following 113-residue polypeptide: Nucleoid-associated protein Syncc9605_0027 (113 aa).

Belongs to the YbaB/EbfC family. As to quaternary structure, homodimer.

It is found in the cytoplasm. It localises to the nucleoid. Binds to DNA and alters its conformation. May be involved in regulation of gene expression, nucleoid organization and DNA protection. The protein is Nucleoid-associated protein Syncc9605_0027 of Synechococcus sp. (strain CC9605).